Consider the following 143-residue polypeptide: Small ribosomal subunit protein uS12 (143 aa).

The segment covering 1-19 (MGKPRGLRTARKHVNHRRD) has biased composition (basic residues). Residues 1–23 (MGKPRGLRTARKHVNHRRDQRWA) are disordered. At Pro62 the chain carries 3-hydroxyproline.

The protein belongs to the universal ribosomal protein uS12 family. Component of the 40S small ribosomal subunit. In terms of processing, hydroxylation at Pro-62 affects translation termination efficiency.

Its subcellular location is the cytoplasm. It is found in the cytosol. The protein localises to the rough endoplasmic reticulum. This Drosophila melanogaster (Fruit fly) protein is Small ribosomal subunit protein uS12 (RpS23).